The sequence spans 291 residues: B3 domain-containing protein At2g16210 (291 aa).

Positions 19–114 form a DNA-binding region, TF-B3 1; the sequence is FFKVVQSINV…HFTVNIFKLD (96 aa). The span at 149–159 shows a compositional bias: polar residues; sequence VSSNRGQTTAA. A disordered region spans residues 149 to 182; that stretch reads VSSNRGQTTAAESKGRKLNLGKRAAKESQSSKRT. Residues 172-182 show a composition bias toward basic and acidic residues; the sequence is AAKESQSSKRT. Positions 200–291 form a DNA-binding region, TF-B3 2; that stretch reads AAAFTILFKQ…KELLLVVSKP (92 aa).

Its subcellular location is the nucleus. This chain is B3 domain-containing protein At2g16210, found in Arabidopsis thaliana (Mouse-ear cress).